The following is a 709-amino-acid chain: MLLRLTARSIRRFTTSSSSLPLLSSSSFCTVPTMAANHPKDEAYLSAVIPKRIKLFEQIQANQLENLKSLPHDPIKVTLPDGNVKEGKKWETTPMDIAAQISKGLANSALISAVDDVLWDMNRPLEGDCKLELFKFDSDKGRDTLWHSSAHILGQALEQEYGCQLCIGPCTTRGEGFYYDGFYGELGLSDNHFPSIEAGAAKAAKEAQPFERIEVTKDQALEMFSENNFKVELINGLPADMTITVYRCGPLVDLCRGPHIPNTSFVKAFKCLRASSAYWKGDKDRESLQRVYGISYPDQKQLKKYLQFLEEAKKYDHRLLGQKQELFFSHQLSPGSYFFLPLGTRVYNRLMDFIKNQYWHRGYTEVITPNMYNMELWQTSGHADNYKDNMFTFNIEKQEFGLKPMNCPGHCLIFQHRVRSYRELPMRLADFGVLHRNEASGALSGLTRVRRFQQDDAHIFCTTEQVKGEVQGVLEFIDYVYKVFGFTYELKLSTRPEKYLGDLETWDKAEADLKEAIEAFGKPLVLNEGDGAFYGPKIDITVSDAMNRKFQCATLQLDFQLPIRFNLEYAAEDEAKKSRPVMIHRAVLGSVERMFAILLEHYKGKWPFWISPRQAIVCPISEKSQQYAEKVQKQIKDAGFYVDADLTDRKIDKKVREAQLAQYNYILVVGETEAATGQVSVRVRDNAAHSVKSIEDLLEEFKAKTAEFV.

The transit peptide at 1–21 (MLLRLTARSIRRFTTSSSSLP) directs the protein to the mitochondrion. One can recognise a TGS domain in the interval 73–135 (DPIKVTLPDG…EGDCKLELFK (63 aa)). 3 residues coordinate Zn(2+): Cys-407, His-458, and His-584.

The protein belongs to the class-II aminoacyl-tRNA synthetase family.

The protein localises to the mitochondrion. It localises to the cytoplasm. Its subcellular location is the cytosol. It carries out the reaction tRNA(Thr) + L-threonine + ATP = L-threonyl-tRNA(Thr) + AMP + diphosphate + H(+). This Arabidopsis thaliana (Mouse-ear cress) protein is Threonine--tRNA ligase, mitochondrial 1.